We begin with the raw amino-acid sequence, 84 residues long: uncharacterized protein (84 aa).

This is an uncharacterized protein from Lepidoptera (butterflies and moths).